A 193-amino-acid polypeptide reads, in one-letter code: Large ribosomal subunit protein bL12cy (193 aa).

A chloroplast-targeting transit peptide spans 1–59; it reads MAATTLSIATTIRSSSFSSGLASAHHFPSRPLSIEFPFSFGVSSSSTLSHRAIYLHPIS. The span at 170-187 shows a compositional bias: basic and acidic residues; it reads GVTKDEAEEDKTQLEEAG. The disordered stretch occupies residues 170-193; the sequence is GVTKDEAEEDKTQLEEAGAKVSIV.

It belongs to the bacterial ribosomal protein bL12 family.

Its subcellular location is the plastid. The protein localises to the chloroplast. This chain is Large ribosomal subunit protein bL12cy (RPL12B), found in Arabidopsis thaliana (Mouse-ear cress).